We begin with the raw amino-acid sequence, 256 residues long: tRNA-cytidine(32) 2-sulfurtransferase (256 aa).

The short motif at 35-40 is the PP-loop motif element; the sequence is SGGKDS. [4Fe-4S] cluster-binding residues include cysteine 110, cysteine 113, and cysteine 201.

It belongs to the TtcA family. In terms of assembly, homodimer. It depends on Mg(2+) as a cofactor. [4Fe-4S] cluster is required as a cofactor.

The protein resides in the cytoplasm. The enzyme catalyses cytidine(32) in tRNA + S-sulfanyl-L-cysteinyl-[cysteine desulfurase] + AH2 + ATP = 2-thiocytidine(32) in tRNA + L-cysteinyl-[cysteine desulfurase] + A + AMP + diphosphate + H(+). It functions in the pathway tRNA modification. In terms of biological role, catalyzes the ATP-dependent 2-thiolation of cytidine in position 32 of tRNA, to form 2-thiocytidine (s(2)C32). The sulfur atoms are provided by the cysteine/cysteine desulfurase (IscS) system. The sequence is that of tRNA-cytidine(32) 2-sulfurtransferase from Coxiella burnetii (strain CbuG_Q212) (Coxiella burnetii (strain Q212)).